A 622-amino-acid polypeptide reads, in one-letter code: Low affinity potassium transport system protein Kup (622 aa).

12 consecutive transmembrane segments (helical) span residues 9–29 (LSAITLAAIGVVYGDIGTSPL), 49–69 (VFGFLSLIFWLLIFVVSIKYL), 103–123 (VIMGLIGGSFFYGEVVITPAI), 137–157 (PELDTWVVPLSIIVLTLLFMI), 165–185 (VGKLFAPIMLTWFLILAGLGL), 213–233 (VSFIALGAVVLSITGVEALYA), 247–267 (WFSVVLPSLTLNYFGQGALLL), 276–296 (PFFLLAPEWALIPLLILAALA), 337–357 (IYIPFVNWMLYFAVVIVIVSF), 363–383 (LAAAYGIAVTGTMVLTSILST), 396–416 (FVALILVAFLCVDVPLFSANL), and 419–439 (LLSGGWLPLTLGIVMFIIMTT).

This sequence belongs to the HAK/KUP transporter (TC 2.A.72) family.

It localises to the cell inner membrane. The catalysed reaction is K(+)(in) + H(+)(in) = K(+)(out) + H(+)(out). Responsible for the low-affinity transport of potassium into the cell. Likely operates as a K(+):H(+) symporter. In Citrobacter koseri (strain ATCC BAA-895 / CDC 4225-83 / SGSC4696), this protein is Low affinity potassium transport system protein Kup.